A 142-amino-acid chain; its full sequence is Large ribosomal subunit protein uL11 (142 aa).

It belongs to the universal ribosomal protein uL11 family. Part of the ribosomal stalk of the 50S ribosomal subunit. Interacts with L10 and the large rRNA to form the base of the stalk. L10 forms an elongated spine to which L12 dimers bind in a sequential fashion forming a multimeric L10(L12)X complex. In terms of processing, one or more lysine residues are methylated.

Functionally, forms part of the ribosomal stalk which helps the ribosome interact with GTP-bound translation factors. This is Large ribosomal subunit protein uL11 from Maricaulis maris (strain MCS10) (Caulobacter maris).